Here is an 877-residue protein sequence, read N- to C-terminus: Alanine--tRNA ligase (877 aa).

The Zn(2+) site is built by His-567, His-571, Cys-669, and His-673.

It belongs to the class-II aminoacyl-tRNA synthetase family. Zn(2+) is required as a cofactor.

The protein localises to the cytoplasm. The catalysed reaction is tRNA(Ala) + L-alanine + ATP = L-alanyl-tRNA(Ala) + AMP + diphosphate. In terms of biological role, catalyzes the attachment of alanine to tRNA(Ala) in a two-step reaction: alanine is first activated by ATP to form Ala-AMP and then transferred to the acceptor end of tRNA(Ala). Also edits incorrectly charged Ser-tRNA(Ala) and Gly-tRNA(Ala) via its editing domain. The polypeptide is Alanine--tRNA ligase (Rickettsia prowazekii (strain Madrid E)).